We begin with the raw amino-acid sequence, 506 residues long: ATP synthase subunit alpha (506 aa).

171–178 (GDRQTGKT) contacts ATP.

This sequence belongs to the ATPase alpha/beta chains family. As to quaternary structure, F-type ATPases have 2 components, CF(1) - the catalytic core - and CF(0) - the membrane proton channel. CF(1) has five subunits: alpha(3), beta(3), gamma(1), delta(1), epsilon(1). CF(0) has four main subunits: a(1), b(1), b'(1) and c(9-12).

The protein localises to the cellular thylakoid membrane. It carries out the reaction ATP + H2O + 4 H(+)(in) = ADP + phosphate + 5 H(+)(out). Its function is as follows. Produces ATP from ADP in the presence of a proton gradient across the membrane. The alpha chain is a regulatory subunit. This Nostoc sp. (strain PCC 7120 / SAG 25.82 / UTEX 2576) protein is ATP synthase subunit alpha.